We begin with the raw amino-acid sequence, 175 residues long: NAD(P)H-quinone oxidoreductase subunit J (175 aa).

This sequence belongs to the complex I 30 kDa subunit family. As to quaternary structure, NDH-1 can be composed of about 15 different subunits; different subcomplexes with different compositions have been identified which probably have different functions.

It localises to the cellular thylakoid membrane. The enzyme catalyses a plastoquinone + NADH + (n+1) H(+)(in) = a plastoquinol + NAD(+) + n H(+)(out). It carries out the reaction a plastoquinone + NADPH + (n+1) H(+)(in) = a plastoquinol + NADP(+) + n H(+)(out). Functionally, NDH-1 shuttles electrons from an unknown electron donor, via FMN and iron-sulfur (Fe-S) centers, to quinones in the respiratory and/or the photosynthetic chain. The immediate electron acceptor for the enzyme in this species is believed to be plastoquinone. Couples the redox reaction to proton translocation, and thus conserves the redox energy in a proton gradient. Cyanobacterial NDH-1 also plays a role in inorganic carbon-concentration. The polypeptide is NAD(P)H-quinone oxidoreductase subunit J (Nostoc sp. (strain PCC 7120 / SAG 25.82 / UTEX 2576)).